We begin with the raw amino-acid sequence, 383 residues long: Embryonic pepsinogen (383 aa).

Positions 1 to 16 are cleaved as a signal peptide; sequence MRSLALLCAVLALSDG. In terms of domain architecture, Peptidase A1 spans 76-380; it reads YYGTISIGTP…DRANNRVGLA (305 aa). Residue Asp94 is part of the active site. A disulfide bridge connects residues Cys107 and Cys112. 2 N-linked (GlcNAc...) asparagine glycosylation sites follow: Asn132 and Asn204. Cys267 and Cys271 are disulfide-bonded. The active site involves Asp276. The N-linked (GlcNAc...) asparagine glycan is linked to Asn309. Residues Cys310 and Cys344 are joined by a disulfide bond. An N-linked (GlcNAc...) asparagine glycan is attached at Asn350.

This sequence belongs to the peptidase A1 family.

This Gallus gallus (Chicken) protein is Embryonic pepsinogen.